The primary structure comprises 646 residues: 1-deoxy-D-xylulose-5-phosphate synthase (646 aa).

Residues histidine 86 and 127–129 (AHS) contribute to the thiamine diphosphate site. Aspartate 158 is a binding site for Mg(2+). Thiamine diphosphate is bound by residues 159 to 160 (GA), asparagine 188, tyrosine 295, and glutamate 377. Asparagine 188 serves as a coordination point for Mg(2+).

Belongs to the transketolase family. DXPS subfamily. As to quaternary structure, homodimer. Mg(2+) is required as a cofactor. The cofactor is thiamine diphosphate.

It catalyses the reaction D-glyceraldehyde 3-phosphate + pyruvate + H(+) = 1-deoxy-D-xylulose 5-phosphate + CO2. It functions in the pathway metabolic intermediate biosynthesis; 1-deoxy-D-xylulose 5-phosphate biosynthesis; 1-deoxy-D-xylulose 5-phosphate from D-glyceraldehyde 3-phosphate and pyruvate: step 1/1. Its function is as follows. Catalyzes the acyloin condensation reaction between C atoms 2 and 3 of pyruvate and glyceraldehyde 3-phosphate to yield 1-deoxy-D-xylulose-5-phosphate (DXP). This is 1-deoxy-D-xylulose-5-phosphate synthase from Burkholderia cenocepacia (strain HI2424).